The primary structure comprises 180 residues: Shikimate kinase (180 aa).

Residue 14-19 (GAGKSC) participates in ATP binding. A Mg(2+)-binding site is contributed by serine 18. Substrate is bound by residues aspartate 36, arginine 60, and glycine 82. ATP is bound at residue arginine 120. Arginine 139 serves as a coordination point for substrate.

The protein belongs to the shikimate kinase family. In terms of assembly, monomer. Mg(2+) serves as cofactor.

It is found in the cytoplasm. The enzyme catalyses shikimate + ATP = 3-phosphoshikimate + ADP + H(+). Its pathway is metabolic intermediate biosynthesis; chorismate biosynthesis; chorismate from D-erythrose 4-phosphate and phosphoenolpyruvate: step 5/7. In terms of biological role, catalyzes the specific phosphorylation of the 3-hydroxyl group of shikimic acid using ATP as a cosubstrate. The sequence is that of Shikimate kinase from Xanthomonas euvesicatoria pv. vesicatoria (strain 85-10) (Xanthomonas campestris pv. vesicatoria).